Reading from the N-terminus, the 342-residue chain is Lumican (342 aa).

The N-terminal stretch at 1 to 18 (MNLGVFPLLLALIGGASS) is a signal peptide. Residues tyrosine 20, tyrosine 23, and tyrosine 34 each carry the sulfotyrosine modification. Positions 32–70 (ALYGRSSPNCAPECNCPESYPSAMYCDELKLKSVPMVPP) constitute an LRRNT domain. LRR repeat units follow at residues 71–92 (GIKY…AFEN), 95–118 (DLQW…VFSK), 121–141 (QLKK…PLPK), 142–163 (SLVD…DGLV), 164–185 (NLTF…AALK), 189–209 (SLEY…GLPV), 210–231 (SLLT…YFKR), and 234–254 (ALQY…PGNS). An N-linked (GlcNAc...) (keratan sulfate) asparagine glycan is attached at asparagine 92. An N-linked (GlcNAc...) (keratan sulfate) asparagine glycan is attached at asparagine 131. Residue asparagine 164 is glycosylated (N-linked (GlcNAc...) (keratan sulfate) asparagine). An N-linked (GlcNAc...) (keratan sulfate) asparagine glycan is attached at asparagine 256. LRR repeat units lie at residues 259–280 (SLLE…NENL) and 281–300 (ENYY…SFCK). Cysteine 299 and cysteine 332 form a disulfide bridge. Serine 308 is subject to Phosphoserine. Residues 309-330 (KIKHLRLDGNHITQTSLPPDMY) form an LRR 11 repeat.

The protein belongs to the small leucine-rich proteoglycan (SLRP) family. SLRP class II subfamily. Binds to laminin. In terms of processing, sulfated on tyrosine residue(s). Contains keratan sulfate. In terms of tissue distribution, cornea and other tissues.

It is found in the secreted. The protein localises to the extracellular space. It localises to the extracellular matrix. The polypeptide is Lumican (LUM) (Bos taurus (Bovine)).